Here is a 192-residue protein sequence, read N- to C-terminus: MNAIWIAVAAVSLLGLAFGAILGYASRRFAVEDDPVVEKIDEILPQSQCGQCGYPGCRPYAEAISCNGEKINRCAPGGEAVMLKIAELLNVEPQPLDGEAPELTPARMVAVIDENNCIGCTKCIQACPVDAIVGATRAMHTVMSDLCTGCNLCVDPCPTHCISLQPVAETPDSWKWDLNTIPVRIIPVEHHA.

A hydrophobic region spans residues 1–26 (MNAIWIAVAAVSLLGLAFGAILGYAS). A 4Fe-4S domain is found at 32–91 (EDDPVVEKIDEILPQSQCGQCGYPGCRPYAEAISCNGEKINRCAPGGEAVMLKIAELLNV). Positions 49, 52, 57, 74, 117, 120, 123, 127, 147, 150, 153, and 157 each coordinate [4Fe-4S] cluster. 2 4Fe-4S ferredoxin-type domains span residues 108-137 (MVAV…GATR) and 138-167 (AMHT…LQPV).

It belongs to the 4Fe4S bacterial-type ferredoxin family. RnfB subfamily. As to quaternary structure, the complex is composed of six subunits: RsxA, RsxB, RsxC, RsxD, RsxE and RsxG. The cofactor is [4Fe-4S] cluster.

It is found in the cell inner membrane. In terms of biological role, part of a membrane-bound complex that couples electron transfer with translocation of ions across the membrane. Required to maintain the reduced state of SoxR. This chain is Ion-translocating oxidoreductase complex subunit B, found in Escherichia coli O127:H6 (strain E2348/69 / EPEC).